Reading from the N-terminus, the 629-residue chain is Hemocyanin G chain (629 aa).

6 residues coordinate Cu cation: His-171, His-175, His-202, His-322, His-326, and His-362. Asn-447 and Asn-506 each carry an N-linked (GlcNAc...) asparagine glycan. A disulfide bridge links Cys-534 with Cys-582. N-linked (GlcNAc...) asparagine glycosylation occurs at Asn-615.

It belongs to the tyrosinase family. Hemocyanin subfamily. In terms of assembly, tarantula hemocyanin is a 24-chain polymer with seven different chains identified. In terms of tissue distribution, hemolymph.

Its subcellular location is the secreted. The protein resides in the extracellular space. Functionally, hemocyanins are copper-containing oxygen carriers occurring freely dissolved in the hemolymph of many mollusks and arthropods. This is Hemocyanin G chain (HCG) from Aphonopelma sp. (American tarantula).